Reading from the N-terminus, the 245-residue chain is 4-hydroxy-tetrahydrodipicolinate reductase (245 aa).

Residues 7–12 (GAKGKV), 75–77 (GTT), and 102–105 (APNF) contribute to the NAD(+) site. The Proton donor/acceptor role is filled by His132. Position 133 (His133) interacts with (S)-2,3,4,5-tetrahydrodipicolinate. Lys136 serves as the catalytic Proton donor. Position 142 to 143 (142 to 143 (GT)) interacts with (S)-2,3,4,5-tetrahydrodipicolinate.

It belongs to the DapB family.

The protein resides in the cytoplasm. The catalysed reaction is (S)-2,3,4,5-tetrahydrodipicolinate + NAD(+) + H2O = (2S,4S)-4-hydroxy-2,3,4,5-tetrahydrodipicolinate + NADH + H(+). It carries out the reaction (S)-2,3,4,5-tetrahydrodipicolinate + NADP(+) + H2O = (2S,4S)-4-hydroxy-2,3,4,5-tetrahydrodipicolinate + NADPH + H(+). The protein operates within amino-acid biosynthesis; L-lysine biosynthesis via DAP pathway; (S)-tetrahydrodipicolinate from L-aspartate: step 4/4. Its function is as follows. Catalyzes the conversion of 4-hydroxy-tetrahydrodipicolinate (HTPA) to tetrahydrodipicolinate. This is 4-hydroxy-tetrahydrodipicolinate reductase from Mycobacterium marinum (strain ATCC BAA-535 / M).